Consider the following 349-residue polypeptide: Fe(3+) ions import ATP-binding protein FbpC (349 aa).

Residues 4-236 (LDFNKIGKSY…PIDEPTATFL (233 aa)) form the ABC transporter domain. 36–43 (GPSGSGKT) serves as a coordination point for ATP.

This sequence belongs to the ABC transporter superfamily. Fe(3+) ion importer (TC 3.A.1.10) family. In terms of assembly, the complex is composed of two ATP-binding proteins (FbpC), two transmembrane proteins (FbpB) and a solute-binding protein (FbpA).

The protein resides in the cell inner membrane. The catalysed reaction is Fe(3+)(out) + ATP + H2O = Fe(3+)(in) + ADP + phosphate + H(+). Its function is as follows. Part of the ABC transporter complex FbpABC involved in Fe(3+) ions import. Responsible for energy coupling to the transport system. In Yersinia enterocolitica, this protein is Fe(3+) ions import ATP-binding protein FbpC.